The chain runs to 339 residues: Non-homologous end joining protein Ku (339 aa).

The Ku domain occupies 10–187; that stretch reads ITFGLVNIPV…LPKATTGKPT (178 aa). Disordered regions lie at residues 230-251 and 263-339; these read DSGK…RQGA and SLGQ…KHAA. Over residues 267 to 277 the composition is skewed to basic and acidic residues; it reads RGKEDKEDATP. Residues 278–289 are compositionally biased toward basic residues; that stretch reads ARRKAPARHAAA. Residues 290-310 show a composition bias toward low complexity; it reads RKQPAAKRAATPPAKRASTAA.

This sequence belongs to the prokaryotic Ku family. Homodimer. Interacts with LigD.

Functionally, with LigD forms a non-homologous end joining (NHEJ) DNA repair enzyme, which repairs dsDNA breaks with reduced fidelity. Binds linear dsDNA with 5'- and 3'- overhangs but not closed circular dsDNA nor ssDNA. Recruits and stimulates the ligase activity of LigD. This Cupriavidus necator (strain ATCC 17699 / DSM 428 / KCTC 22496 / NCIMB 10442 / H16 / Stanier 337) (Ralstonia eutropha) protein is Non-homologous end joining protein Ku.